The sequence spans 256 residues: Triosephosphate isomerase (256 aa).

Residue 9 to 11 (NWK) coordinates substrate. Histidine 97 (electrophile) is an active-site residue. Glutamate 169 functions as the Proton acceptor in the catalytic mechanism. Substrate-binding positions include glycine 175, serine 214, and 235 to 236 (GG).

This sequence belongs to the triosephosphate isomerase family. Homodimer.

The protein resides in the cytoplasm. It carries out the reaction D-glyceraldehyde 3-phosphate = dihydroxyacetone phosphate. It functions in the pathway carbohydrate biosynthesis; gluconeogenesis. The protein operates within carbohydrate degradation; glycolysis; D-glyceraldehyde 3-phosphate from glycerone phosphate: step 1/1. In terms of biological role, involved in the gluconeogenesis. Catalyzes stereospecifically the conversion of dihydroxyacetone phosphate (DHAP) to D-glyceraldehyde-3-phosphate (G3P). In Aliivibrio salmonicida (strain LFI1238) (Vibrio salmonicida (strain LFI1238)), this protein is Triosephosphate isomerase.